The following is a 1044-amino-acid chain: Isoleucine--tRNA ligase (1044 aa).

The 'HIGH' region signature appears at 48–58 (PFATGLPHFGH). Residues 594-598 (KMSKS) carry the 'KMSKS' region motif. K597 is an ATP binding site.

This sequence belongs to the class-I aminoacyl-tRNA synthetase family. IleS type 2 subfamily. In terms of assembly, monomer. Requires Zn(2+) as cofactor.

Its subcellular location is the cytoplasm. It carries out the reaction tRNA(Ile) + L-isoleucine + ATP = L-isoleucyl-tRNA(Ile) + AMP + diphosphate. Functionally, catalyzes the attachment of isoleucine to tRNA(Ile). As IleRS can inadvertently accommodate and process structurally similar amino acids such as valine, to avoid such errors it has two additional distinct tRNA(Ile)-dependent editing activities. One activity is designated as 'pretransfer' editing and involves the hydrolysis of activated Val-AMP. The other activity is designated 'posttransfer' editing and involves deacylation of mischarged Val-tRNA(Ile). In Borrelia turicatae (strain 91E135), this protein is Isoleucine--tRNA ligase.